The sequence spans 180 residues: Adenine phosphoribosyltransferase (180 aa).

This sequence belongs to the purine/pyrimidine phosphoribosyltransferase family. Homodimer.

The protein localises to the cytoplasm. It catalyses the reaction AMP + diphosphate = 5-phospho-alpha-D-ribose 1-diphosphate + adenine. It functions in the pathway purine metabolism; AMP biosynthesis via salvage pathway; AMP from adenine: step 1/1. Catalyzes a salvage reaction resulting in the formation of AMP, that is energically less costly than de novo synthesis. The sequence is that of Adenine phosphoribosyltransferase from Haemophilus influenzae (strain 86-028NP).